The primary structure comprises 65 residues: uncharacterized protein (65 aa).

It localises to the plastid. It is found in the chloroplast. This is an uncharacterized protein from Guillardia theta (Cryptophyte).